The sequence spans 423 residues: Endoplasmic reticulum junction formation protein lunapark (423 aa).

Topologically, residues 1–45 (MGALLAKWRAKPSTVEVLEKMEKDIQSLEEFRDKNQKLRKIWVAR) are cytoplasmic. Residues 16–40 (EVLEKMEKDIQSLEEFRDKNQKLRK) adopt a coiled-coil conformation. Residues 46-66 (LFFYSTILYILTSLTVYLWYL) traverse the membrane as a helical segment. Residues 67–77 (PDGMTARLLTM) lie on the Lumenal side of the membrane. The chain crosses the membrane as a helical span at residues 78–98 (LLFLSFPVLIWFVRTLLILWF). At 99-423 (SRRTERNNDA…ETEESFMETE (325 aa)) the chain is on the cytoplasmic side. Residues 101 to 128 (RTERNNDALELLKTEKKKILEEVMEKET) are a coiled coil. Positions 147–169 (KELELPVPGPPITPRPGQDLRQR) are disordered. Thr-159 is subject to Phosphothreonine. Ser-177, Ser-179, and Ser-188 each carry phosphoserine. Thr-198 is modified (phosphothreonine). Residues 200–247 (SLQRDTSAPGGPPERSVQPTPQSNILQRRPGSPATTVSGMAIHPPGPP) form a disordered region. Phosphoserine is present on residues Ser-206 and Ser-215. Polar residues predominate over residues 216–225 (VQPTPQSNIL). Thr-219 is modified (phosphothreonine). Phosphoserine is present on residues Ser-222 and Ser-231. The C4-type; plays a role in ER morphology zinc-finger motif lies at 280-305 (CQQCFSHNGMALKEEFEYVAFRCAYC). A disordered region spans residues 318–423 (APRLQEINFD…ETEESFMETE (106 aa)). Polar residues predominate over residues 334–343 (DSQGSVSSVQ). Acidic residues-rich tracts occupy residues 370-391 (QAIE…DDSE) and 414-423 (ETEESFMETE).

Belongs to the lunapark family. Homodimer; homodimerization requires the C4-type zinc finger motif and decreases during mitosis in a phosphorylation-dependent manner. Phosphorylated. Phosphorylation at Thr-159 occurs during interphase. Phosphorylation at Ser-177, Ser-179, Ser-188, Thr-198, Ser-206, Ser-215, Thr-219, Ser-222 and Ser-231 occurs during mitosis; these phosphorylations reduce both its homodimerization and the ER three-way tubular junction formation.

The protein localises to the endoplasmic reticulum membrane. Its function is as follows. Endoplasmic reticulum (ER)-shaping membrane protein that plays a role in determining ER morphology. Involved in the stabilization of nascent three-way ER tubular junctions within the ER network. May also play a role as a curvature-stabilizing protein within three-way ER tubular junction network. In Xenopus tropicalis (Western clawed frog), this protein is Endoplasmic reticulum junction formation protein lunapark (lnpk).